A 200-amino-acid chain; its full sequence is Bombinin-like peptides 3 (200 aa).

Residues 1-16 constitute a signal peptide (or 18); that stretch reads MNFKYIVAVSILIASA. Residues Phe-68 and Phe-129 each carry the phenylalanine amide modification.

It belongs to the bombinin family. Expressed by the skin glands.

Its subcellular location is the secreted. Its function is as follows. Has antimicrobial activity, but no hemolytic activity. Preference on killing Gram-negative non-enteric bacteria. In Bombina orientalis (Oriental fire-bellied toad), this protein is Bombinin-like peptides 3.